Consider the following 299-residue polypeptide: Probable lipid kinase YegS-like (299 aa).

The DAGKc domain occupies 2–133 (EKNPITLLIL…IDIAKVNDGH (132 aa)). ATP contacts are provided by residues threonine 40, 66–72 (GDGTVNE), and threonine 95. Positions 215, 218, and 220 each coordinate Mg(2+). Catalysis depends on glutamate 271, which acts as the Proton acceptor.

Belongs to the diacylglycerol/lipid kinase family. YegS lipid kinase subfamily. Mg(2+) serves as cofactor. It depends on Ca(2+) as a cofactor.

Its subcellular location is the cytoplasm. Its function is as follows. Probably phosphorylates lipids; the in vivo substrate is unknown. The sequence is that of Probable lipid kinase YegS-like from Pectobacterium atrosepticum (strain SCRI 1043 / ATCC BAA-672) (Erwinia carotovora subsp. atroseptica).